Consider the following 1046-residue polypeptide: Multidrug resistance protein MexB (1046 aa).

Topologically, residues 1-9 (MSKFFIDRP) are cytoplasmic. Residues 10-28 (IFAWVIALVIMLAGGLSIL) form a helical membrane-spanning segment. Residues 29–339 (SLPVNQYPAI…TPVVSASIHE (311 aa)) are Periplasmic-facing. A helical transmembrane segment spans residues 340-359 (VVKTLGEAILLVFLVMYLFL). At 360-365 (QNFRAT) the chain is on the cytoplasmic side. The helical transmembrane segment at 366–385 (LIPTIAVPVVLLGTFGVLAA) threads the bilayer. The Periplasmic segment spans residues 386–391 (FGFSIN). Residues 392–413 (TLTMFGMVLAIGLLVDDAIVVV) traverse the membrane as a helical segment. Residues 414-441 (ENVERVMAEEGLSPREAARKSMGQIQGA) lie on the Cytoplasmic side of the membrane. A helical transmembrane segment spans residues 442 to 460 (LVGIAMVLSAVFLPMAFFG). Over 461 to 473 (GSTGVIYRQFSIT) the chain is Periplasmic. The chain crosses the membrane as a helical span at residues 474 to 496 (IVSAMALSVIVALILTPALCATM). Over 497–538 (LKPIEKGDHGEHKGGFFGWFNRMFLSTTHGYERGVASILKHR) the chain is Cytoplasmic. Residues 539–557 (APYLLIYVVIVAGMIWMFT) traverse the membrane as a helical segment. Residues 558 to 871 (RIPTAFLPDE…SYEERLSGSQ (314 aa)) lie on the Periplasmic side of the membrane. A helical transmembrane segment spans residues 872 to 891 (APALYALSLLVVFLCLAALY). At 892 to 897 (ESWSIP) the chain is on the cytoplasmic side. A helical transmembrane segment spans residues 898 to 917 (FSVMLVVPLGVIGALLATSM). Over 918–923 (RGLSND) the chain is Periplasmic. A helical transmembrane segment spans residues 924 to 945 (VFFQVGLLTTIGLSAKNAILIV). The Cytoplasmic portion of the chain corresponds to 946–972 (EFAKELHEQGKGIVEAAIEACRMRLRP). A helical membrane pass occupies residues 973–991 (IVMTSLAFILGVVPLAIST). Topologically, residues 992-1004 (GAGSGSQHAIGTG) are periplasmic. Residues 1005 to 1027 (VIGGMVTATVLAIFWVPLFYVAV) form a helical membrane-spanning segment. The Cytoplasmic portion of the chain corresponds to 1028–1046 (STLFKDEASKQQASVEKGQ).

The protein belongs to the resistance-nodulation-cell division (RND) (TC 2.A.6) family. As to quaternary structure, component of the MexAB-OprM multidrug efflux complex, composed of six MexA subunits forming a hexameric tube, binding to a MexB trimer, which interact with the trimeric OprM outer membrane channel protein. OprM is thought to not directly contact MexB; instead, MexA joins MexB and OprM by forming a funnel-like hexamer anchored to the inner membrane. MexA may initially form a hexameric ring complex with MexB prior to OprM, then OprM undergoes a conformational change as it contacts MexA, allowing the periplasmic gate to open. It is thought that, under high intracellular substrate concentration, MexB ejects substrate into the tunnel formed by MexA-OprM; as the substrate level declines, conformational changes in MexB cause efflux to reduce and stop and the complex shifts to the closed state. Acts as a substrate:proton antiporter and activity is enhanced significantly when in complex with MexA and OprM, in vitro.

The protein localises to the cell inner membrane. Export of antibiotics and solvents is dramatically decreased in the presence of the protonophore carbonyl cyanide m-chlorophenylhydrazone (CCCP), therefore may be driven by a proton gradient. Antibiotic efflux is inhibited by pyridopyrimidine derivatives, such as ABI-PP, acting by binding to a hydrophobic pocket in MexB. The inner membrane transporter component of the MexAB-OprM efflux system that confers multidrug resistance. Functions as the major efflux pump for n-hexane and p-xylene efflux. Has been shown in one study to be involved in the active efflux of the autoinducer N-(3-oxododecanoyl) homoserine lactone, thereby playing an indirect role in quorum-sensing; but has been shown in another study not to be involved in efflux of this autoinducer. Over-expression of the pump increases antibiotic and solvent efflux capacities. Implicated in the secretion of the siderophore pyoverdine. This is Multidrug resistance protein MexB (mexB) from Pseudomonas aeruginosa (strain ATCC 15692 / DSM 22644 / CIP 104116 / JCM 14847 / LMG 12228 / 1C / PRS 101 / PAO1).